A 242-amino-acid chain; its full sequence is ATP-dependent dethiobiotin synthetase BioD (242 aa).

ATP is bound at residue 12–17 (EVGKTV). A Mg(2+)-binding site is contributed by Thr16. The active site involves Lys37. Ser41 lines the substrate pocket. Residues Asp51 and 112–115 (EGAG) each bind ATP. Residues Asp51 and Glu112 each coordinate Mg(2+).

This sequence belongs to the dethiobiotin synthetase family. Homodimer. It depends on Mg(2+) as a cofactor.

It localises to the cytoplasm. It carries out the reaction (7R,8S)-7,8-diammoniononanoate + CO2 + ATP = (4R,5S)-dethiobiotin + ADP + phosphate + 3 H(+). Its pathway is cofactor biosynthesis; biotin biosynthesis; biotin from 7,8-diaminononanoate: step 1/2. Catalyzes a mechanistically unusual reaction, the ATP-dependent insertion of CO2 between the N7 and N8 nitrogen atoms of 7,8-diaminopelargonic acid (DAPA, also called 7,8-diammoniononanoate) to form a ureido ring. In Bacillus cereus (strain B4264), this protein is ATP-dependent dethiobiotin synthetase BioD.